The following is a 701-amino-acid chain: Elongation factor G (701 aa).

Residues 8–286 (ERIRNIGIIA…AIVHYLPSPV (279 aa)) form the tr-type G domain. Residues 17-24 (AHIDAGKT), 85-89 (DTPGH), and 139-142 (NKMD) each bind GTP.

This sequence belongs to the TRAFAC class translation factor GTPase superfamily. Classic translation factor GTPase family. EF-G/EF-2 subfamily.

The protein localises to the cytoplasm. In terms of biological role, catalyzes the GTP-dependent ribosomal translocation step during translation elongation. During this step, the ribosome changes from the pre-translocational (PRE) to the post-translocational (POST) state as the newly formed A-site-bound peptidyl-tRNA and P-site-bound deacylated tRNA move to the P and E sites, respectively. Catalyzes the coordinated movement of the two tRNA molecules, the mRNA and conformational changes in the ribosome. The protein is Elongation factor G of Roseiflexus sp. (strain RS-1).